The primary structure comprises 175 residues: Ribosome maturation factor RimM (175 aa).

The PRC barrel domain maps to 100 to 174 (EDEYYWNDVI…VKHKIITVIW (75 aa)).

Belongs to the RimM family. In terms of assembly, binds ribosomal protein uS19.

It is found in the cytoplasm. An accessory protein needed during the final step in the assembly of 30S ribosomal subunit, possibly for assembly of the head region. Essential for efficient processing of 16S rRNA. May be needed both before and after RbfA during the maturation of 16S rRNA. It has affinity for free ribosomal 30S subunits but not for 70S ribosomes. In Buchnera aphidicola subsp. Schizaphis graminum (strain Sg), this protein is Ribosome maturation factor RimM.